The sequence spans 85 residues: Kappa-theraphotoxin-Cg1d (85 aa).

Positions 1 to 21 (MKVSVLITLAVLGVMFVWASA) are cleaved as a signal peptide. A propeptide spanning residues 22-51 (AELEERGSDQRDSPAWLKSMERIFQSEERE) is cleaved from the precursor. Cystine bridges form between C52–C66, C59–C71, and C65–C78.

It belongs to the neurotoxin 10 (Hwtx-1) family. 28 (Jztx-11) subfamily. As to expression, expressed by the venom gland.

The protein localises to the secreted. Probable ion channel inhibitor. This Chilobrachys guangxiensis (Chinese earth tiger tarantula) protein is Kappa-theraphotoxin-Cg1d.